We begin with the raw amino-acid sequence, 411 residues long: Prostaglandin E2 receptor EP3 subtype (411 aa).

Residues 1 to 49 (MKETRGDGGSAPFCTRLNHSYPGMWAPEARGNLTRPPGPGEDCGSVSVA) lie on the Extracellular side of the membrane. N-linked (GlcNAc...) asparagine glycosylation is found at N18 and N32. A helical membrane pass occupies residues 50–74 (FPITMLITGFVGNALAMLLVSRSYR). The Cytoplasmic segment spans residues 75–87 (RRESKRKKSFLLC). A helical membrane pass occupies residues 88–108 (IGWLALTDLVGQLLTSPVVIL). Residues 109 to 127 (VYLSKQRWEQLDPSGRLCT) lie on the Extracellular side of the membrane. Cysteines 126 and 204 form a disulfide. The chain crosses the membrane as a helical span at residues 128–149 (FFGLTMTVFGLSSLFIASAMAV). Residues 150–171 (ERALAIRAPHWYASHMKTRATR) are Cytoplasmic-facing. The helical transmembrane segment at 172–193 (AVLLGVWLAVLAFALLPVLGVG) threads the bilayer. The Extracellular portion of the chain corresponds to 194-223 (QYTIQWPGTWCFISTGRGDNGTSSSHNWGN). N213 carries N-linked (GlcNAc...) asparagine glycosylation. The chain crosses the membrane as a helical span at residues 224–249 (LFFASTFAFLGLLALAITFTCNLATI). Over 250–279 (KALVSRCRAKAAASQSSAQWGRITTETAIQ) the chain is Cytoplasmic. The helical transmembrane segment at 280–303 (LMGIMCVLSVCWSPLLIMMLKMIF) threads the bilayer. The Extracellular portion of the chain corresponds to 304–323 (NQTSVEHCKTDTGKQKECNF). Residues 324–345 (FLIAVRLASLNQILDPWVYLLL) traverse the membrane as a helical segment. Residues 346 to 411 (RKILLRKFCQ…ADPGARPYQQ (66 aa)) lie on the Cytoplasmic side of the membrane. Basic and acidic residues predominate over residues 367 to 390 (IQRENRNVSHSGQHEEARDSEKSK). Residues 367-392 (IQRENRNVSHSGQHEEARDSEKSKTI) form a disordered region.

Belongs to the G-protein coupled receptor 1 family. In terms of assembly, interacts (via C-terminus) with MKLN1. In the kidney cortex and medulla, adrenal gland and stomach. In kidney, expression is higher in tubules in the outer medulla, with lower levels in cortex. In kidney cortex, expression is restricted to distal tubules.

Its subcellular location is the cell membrane. Receptor for prostaglandin E2 (PGE2). Required for normal development of fever in response to pyrinogens, including IL1B, prostaglandin E2 and bacterial lipopolysaccharide (LPS). Required for normal potentiation of platelet aggregation by prostaglandin E2, and thus plays a role in the regulation of blood coagulation. Required for increased HCO3(-) secretion in the duodenum in response to mucosal acidification, and thereby contributes to the protection of the mucosa against acid-induced ulceration. Not required for normal kidney function, normal urine volume and osmolality. This chain is Prostaglandin E2 receptor EP3 subtype (PTGER3), found in Oryctolagus cuniculus (Rabbit).